The following is a 350-amino-acid chain: Ion-translocating oxidoreductase complex subunit D (350 aa).

The next 3 membrane-spanning stretches (helical) occupy residues 20–39 (IMMLVTLATVPGIAVQWYFF), 89–109 (IPPLAPWWMVVLGTAFAVIIA), and 123–143 (PAMIGYVVLLISFPVQMTNWL). Thr-187 carries the FMN phosphoryl threonine modification. A run of 5 helical transmembrane segments spans residues 215 to 235 (LAGLGWQWVNLAYLAGGLFLL), 244 to 264 (IPVSFLVTLAVCSTLGWLIAP), 267 to 287 (FLSPLMHLLSGATMLGAFFIL), 301 to 321 (LVFGALVGLLVWLIRSFGGYP), and 322 to 342 (DGVAFAVLLANITVPLIDYYT).

It belongs to the NqrB/RnfD family. As to quaternary structure, the complex is composed of six subunits: RnfA, RnfB, RnfC, RnfD, RnfE and RnfG. FMN serves as cofactor.

It is found in the cell inner membrane. Part of a membrane-bound complex that couples electron transfer with translocation of ions across the membrane. The protein is Ion-translocating oxidoreductase complex subunit D of Cronobacter sakazakii (strain ATCC BAA-894) (Enterobacter sakazakii).